A 464-amino-acid chain; its full sequence is ATP synthase subunit beta (464 aa).

153 to 160 (GGAGVGKT) is an ATP binding site.

This sequence belongs to the ATPase alpha/beta chains family. F-type ATPases have 2 components, CF(1) - the catalytic core - and CF(0) - the membrane proton channel. CF(1) has five subunits: alpha(3), beta(3), gamma(1), delta(1), epsilon(1). CF(0) has three main subunits: a(1), b(2) and c(9-12). The alpha and beta chains form an alternating ring which encloses part of the gamma chain. CF(1) is attached to CF(0) by a central stalk formed by the gamma and epsilon chains, while a peripheral stalk is formed by the delta and b chains.

It localises to the cell inner membrane. It carries out the reaction ATP + H2O + 4 H(+)(in) = ADP + phosphate + 5 H(+)(out). Produces ATP from ADP in the presence of a proton gradient across the membrane. The catalytic sites are hosted primarily by the beta subunits. In Burkholderia lata (strain ATCC 17760 / DSM 23089 / LMG 22485 / NCIMB 9086 / R18194 / 383), this protein is ATP synthase subunit beta.